The primary structure comprises 102 residues: Small ribosomal subunit protein uS10 (102 aa).

The protein belongs to the universal ribosomal protein uS10 family. In terms of assembly, part of the 30S ribosomal subunit.

Its function is as follows. Involved in the binding of tRNA to the ribosomes. The polypeptide is Small ribosomal subunit protein uS10 (Methanoculleus marisnigri (strain ATCC 35101 / DSM 1498 / JR1)).